Here is a 204-residue protein sequence, read N- to C-terminus: Elongation factor Ts (204 aa).

The tract at residues 80 to 83 (TDFV) is involved in Mg(2+) ion dislocation from EF-Tu.

It belongs to the EF-Ts family.

It is found in the cytoplasm. Associates with the EF-Tu.GDP complex and induces the exchange of GDP to GTP. It remains bound to the aminoacyl-tRNA.EF-Tu.GTP complex up to the GTP hydrolysis stage on the ribosome. This Thermoanaerobacter sp. (strain X514) protein is Elongation factor Ts.